We begin with the raw amino-acid sequence, 693 residues long: Elongation factor G (693 aa).

The region spanning 8 to 282 (EKTRNIGIMA…AVIDYLPSPL (275 aa)) is the tr-type G domain. GTP contacts are provided by residues 17 to 24 (AHVDAGKT), 81 to 85 (DTPGH), and 135 to 138 (NKMD).

The protein belongs to the TRAFAC class translation factor GTPase superfamily. Classic translation factor GTPase family. EF-G/EF-2 subfamily.

It is found in the cytoplasm. Its function is as follows. Catalyzes the GTP-dependent ribosomal translocation step during translation elongation. During this step, the ribosome changes from the pre-translocational (PRE) to the post-translocational (POST) state as the newly formed A-site-bound peptidyl-tRNA and P-site-bound deacylated tRNA move to the P and E sites, respectively. Catalyzes the coordinated movement of the two tRNA molecules, the mRNA and conformational changes in the ribosome. The sequence is that of Elongation factor G from Streptococcus pneumoniae (strain P1031).